A 320-amino-acid polypeptide reads, in one-letter code: MGTTNLTLDSESICDPNYDILFENAIYFVTACYLSVGLFCHISLLKIILISDRKYFKDNSFFVLFRADLFASTTLLLYDIFFGRIFMYIPQLCPFVSTFFSTPTIFLKVLYVAQNHARFVKSLSQIFMVLNRMSCVLMPATYNQFWNKITPIASFIMLILPFAGLWNIMISQVIASSVRGGFGVDYIKAVKWASLSLFQSICILTALGFTIVCTSVTFYKLACLSDRVRSIERSLCFTSISISCTFLLVAGTQLTFATCASCKTDAMYILQFLAFDTFNVGSAIIMFLTNRHLRSSMFSSQKKRAVTVVTVGQISTNTYN.

Helical transmembrane passes span 25–45, 80–100, 155–175, 192–212, 237–257, and 268–288; these read AIYF…ISLL, IFFG…STFF, FIML…QVIA, WASL…FTIV, FTSI…LTFA, and YILQ…IMFL.

Belongs to the nematode receptor-like protein srg family.

Its subcellular location is the membrane. The polypeptide is Serpentine receptor class gamma-17 (srg-17) (Caenorhabditis elegans).